The primary structure comprises 606 residues: KH domain-containing protein At4g18375 (606 aa).

Residues 1-10 (MVERKKRKQI) show a composition bias toward basic residues. The interval 1–26 (MVERKKRKQIQRNNSESNRNQKRRIS) is disordered. 5 KH domains span residues 35-99 (LVVY…IGFT), 138-210 (NKEC…LFAV), 311-380 (ELVF…VEAV), 394-455 (NVKM…LIQI), and 535-599 (SSAL…ENLV).

It is found in the nucleus. The polypeptide is KH domain-containing protein At4g18375 (Arabidopsis thaliana (Mouse-ear cress)).